The chain runs to 725 residues: MDAPVPAAPAFGGSWAKLNPPLSPWILDVINSMGFKNMTPVQAGTIPRAVKNQDCVVEAVTGSGKTLAFTIPVLERLSRREEPYKKGEIAAIVVAPTRELATQIHAVFHHFLSSLIPPESEEETGDVEAHAPPFASSSRSPSPQTPDKPLFPLPMLVTSGTPTPYETFQSTHPSILIGTPGRLAAFLLNPRGLAIVRVSELDVLVLDEADRLLSSPDHRRDVERIMRHLPKQRRTHLFSATMTDAVEEMIGLGLRNPVRIVVNLKDKRKDGEEPKERRTPMALQNTYLVCRHAEKTLQLIRLLLCESTKHERSKFIVYFSTCAAVDYFYRILSRLPSLSKFHLTSFHGELPPKIRETALSTFTSHPSSHLSPAVLLCTDVAARGVDFLDIDVVIQYDAPTDPKTFSHRAGRTARAGRRGKAVVLLGKGREEDYVDFLNIRKIPLTKQPYINAYLEEVDTPQALDPEATTLLHSIRQIILTDRELSDKAAKSFVSAFRAYSKHEASFIFRTLDFDFNSQAISFGLLRLPAMPEIKDWKKKKEAERQRLEKIKSEGGEVEEKEIIEWEDAGVNWDTFAYASRQREAARLATLAQRADNQSSNDAARAEARAKRKIKAEMREAWSEQKERKVRKEERKEKKDAKKKYEWELEQANGEGDRQSDLANIAKAQAERKKRREREEESWDEEIGKEYKSLKREIKEEKSVKESSKGGAGGGGIGGGMFDDLE.

A Q motif motif is present at residues tryptophan 15 to alanine 43. Residues isoleucine 46–isoleucine 260 enclose the Helicase ATP-binding domain. Alanine 59–threonine 66 provides a ligand contact to ATP. The tract at residues glutamate 119 to leucine 156 is disordered. A compositionally biased stretch (low complexity) spans proline 132–serine 142. The span at proline 143–proline 152 shows a compositional bias: pro residues. A DEAD box motif is present at residues aspartate 207–aspartate 210. Positions lysine 295–aspartate 458 constitute a Helicase C-terminal domain. Residues alanine 591–glutamate 725 form a disordered region. Basic and acidic residues-rich tracts occupy residues alanine 603–tryptophan 646 and glutamate 685–serine 707. Positions glycine 709–glutamate 725 are enriched in gly residues.

The protein belongs to the DEAD box helicase family. DDX55/SPB4 subfamily. In terms of assembly, component of pre-60S ribosomal complexes.

It is found in the nucleus. The protein localises to the nucleolus. It carries out the reaction ATP + H2O = ADP + phosphate + H(+). In terms of biological role, ATP-binding RNA helicase involved in the biogenesis of 60S ribosomal subunits. Binds 90S pre-ribosomal particles and dissociates from pre-60S ribosomal particles after processing of 27SB pre-rRNA. Required for the normal formation of 18S rRNA through the processing of pre-rRNAs at sites A0, A1 and A2, and the normal formation of 25S and 5.8S rRNAs through the processing of pre-rRNAs at sites C1 and C2. This is ATP-dependent rRNA helicase SPB4 from Cryptococcus neoformans var. neoformans serotype D (strain JEC21 / ATCC MYA-565) (Filobasidiella neoformans).